The following is a 570-amino-acid chain: Zinc finger protein 76 (570 aa).

Residue Lys24 forms a Glycyl lysine isopeptide (Lys-Gly) (interchain with G-Cter in SUMO2) linkage. Tandem repeats lie at residues 34-45 (IQLEDGTTAYIH), 62-73 (VQLEDGSMAYIH), and 88-99 (VQLEDGSTAYIH). The 3 X 12 AA approximate repeats stretch occupies residues 34–99 (IQLEDGTTAY…LEDGSTAYIH (66 aa)). 7 consecutive C2H2-type zinc fingers follow at residues 165–189 (FRCG…ERAH), 195–219 (YRCD…VRTH), 225–249 (YKCP…VRTH), 255–279 (FQCP…VRTH), 285–309 (YTCP…VRIH), 315–339 (YVCT…HVVH), and 345–368 (YTCS…RSAH). Residues 365–401 (RSAHGELEATEESEQALYEQQQLEAASAAEESPPPKR) are disordered. The span at 379–395 (QALYEQQQLEAASAAEE) shows a compositional bias: low complexity.

The protein belongs to the krueppel C2H2-type zinc-finger protein family. Testis.

Its subcellular location is the nucleus. Functionally, may be involved in transcriptional regulation. The sequence is that of Zinc finger protein 76 (ZNF76) from Homo sapiens (Human).